Consider the following 1066-residue polypeptide: Thyrotropin-releasing hormone-degrading ectoenzyme (1066 aa).

Residues 1–14 are compositionally biased toward basic and acidic residues; the sequence is MALDGERGEQEEEK. The tract at residues 1–43 is disordered; the sequence is MALDGERGEQEEEKKKKKKKKKRKKKEEEGAEKSSSPFAATMG. Topologically, residues 1-81 are cytoplasmic; the sequence is MALDGERGEQ…ERHIAVHKRL (81 aa). Over residues 15–25 the composition is skewed to basic residues; that stretch reads KKKKKKKKRKK. A Phosphothreonine; by PKC modification is found at Thr-71. A helical; Signal-anchor for type II membrane protein membrane pass occupies residues 82–102; that stretch reads VLAFAVSIVALLAVTMLAVLL. Residues 103 to 1066 lie on the Extracellular side of the membrane; sequence SLRFDECGAS…FQWLGKAMRH (964 aa). Residues 117–177 form a disordered region; sequence GTDGGLGGFP…SEEEQEQWQP (61 aa). The span at 118 to 127 shows a compositional bias: gly residues; the sequence is TDGGLGGFPE. The N-linked (GlcNAc...) asparagine glycan is linked to Asn-131. Basic and acidic residues predominate over residues 143-154; the sequence is HAGEESSQREIG. Asn-202, Asn-217, Asn-264, and Asn-380 each carry an N-linked (GlcNAc...) asparagine glycan. 446-450 is a substrate binding site; that stretch reads AAMEN. His-482 is a Zn(2+) binding site. Glu-483 serves as the catalytic Proton acceptor. His-486 and Glu-505 together coordinate Zn(2+). 7 N-linked (GlcNAc...) asparagine glycosylation sites follow: Asn-647, Asn-676, Asn-691, Asn-705, Asn-726, Asn-842, and Asn-948.

Belongs to the peptidase M1 family. Homodimer; disulfide-linked. Zn(2+) serves as cofactor. As to expression, predominantly expressed in brain and pituitary. Lower levels in lung and liver.

It localises to the membrane. It carries out the reaction Release of the N-terminal pyroglutamyl group from pGlu-|-His-Xaa tripeptides and pGlu-|-His-Xaa-Gly tetrapeptides.. In terms of biological role, specific inactivation of TRH after its release. The sequence is that of Thyrotropin-releasing hormone-degrading ectoenzyme (Trhde) from Rattus norvegicus (Rat).